The sequence spans 135 residues: Sex-regulated protein janus-A (135 aa).

A substrate-binding site is contributed by K37. Residue H63 is the Proton acceptor of the active site. 104–106 serves as a coordination point for substrate; that stretch reads SQG.

Belongs to the janus family.

Its function is as follows. JanA and janB regulate somatic sex differentiation. The protein is Sex-regulated protein janus-A (janA) of Drosophila simulans (Fruit fly).